The primary structure comprises 186 residues: Protein FAM219A (186 aa).

2 disordered regions span residues Met1–Pro47 and Glu59–Ser132. Residues Lys67–Lys81 are compositionally biased toward polar residues. The segment covering Ser123 to Ser132 has biased composition (low complexity).

This sequence belongs to the FAM219 family.

In Danio rerio (Zebrafish), this protein is Protein FAM219A (fam219a).